Reading from the N-terminus, the 341-residue chain is tRNA N6-adenosine threonylcarbamoyltransferase (341 aa).

The Fe cation site is built by His111 and His115. Substrate contacts are provided by residues 133-137, Asp166, Gly179, Asp183, and Asn271; that span reads VVSGG. A Fe cation-binding site is contributed by Asp299.

It belongs to the KAE1 / TsaD family. Requires Fe(2+) as cofactor.

The protein localises to the cytoplasm. The enzyme catalyses L-threonylcarbamoyladenylate + adenosine(37) in tRNA = N(6)-L-threonylcarbamoyladenosine(37) in tRNA + AMP + H(+). Functionally, required for the formation of a threonylcarbamoyl group on adenosine at position 37 (t(6)A37) in tRNAs that read codons beginning with adenine. Is involved in the transfer of the threonylcarbamoyl moiety of threonylcarbamoyl-AMP (TC-AMP) to the N6 group of A37, together with TsaE and TsaB. TsaD likely plays a direct catalytic role in this reaction. The chain is tRNA N6-adenosine threonylcarbamoyltransferase from Fusobacterium nucleatum subsp. nucleatum (strain ATCC 25586 / DSM 15643 / BCRC 10681 / CIP 101130 / JCM 8532 / KCTC 2640 / LMG 13131 / VPI 4355).